A 181-amino-acid polypeptide reads, in one-letter code: ADP-ribosylation factor 1 (181 aa).

Residue Gly2 is the site of N-myristoyl glycine attachment. GTP is bound by residues 24–31 (GLDAAGKT), 67–71 (DVGGQ), and 126–129 (NKQD).

The protein belongs to the small GTPase superfamily. Arf family.

It is found in the golgi apparatus. The enzyme catalyses GTP + H2O = GDP + phosphate + H(+). Its function is as follows. GTP-binding protein involved in protein trafficking; may modulate vesicle budding and uncoating within the Golgi apparatus. This Daucus carota (Wild carrot) protein is ADP-ribosylation factor 1 (ARF1).